A 1033-amino-acid chain; its full sequence is MKKVDVKESAVGRETRIRKQWNEQSIFEQSIQNREGAQSFVFYEGPPTANGLPHVGHALGRTIKDVVARYKTMAGYKVLRKAGWDTHGLPVELGVEKQLGISGKHEIEEYGIEPFTKKCKESVFTYEKQWREFTESIGYWVDMDDPYVTLENPYIESVWHILGTIHEKGLLYKGHRVSPYCPSCQTSLSSHEVAQGYKTVKDLSATVKFKVKDSENEYFLGWTTTPWTLPANVALAVHPNMEYVKAKQEGHVYIVAKERVQDVLKENYEVLSVHKGEELLNTSYTAPFPMKEVTNGYRVIGADFVTADSGTGLVHIAPAYGEDDYRVVQSEGLSFLHVVDEKGEYTEVVPFLKGKFVKDCDVDIVRYLAKEGLLYHKEKYEHSYPHCWRCDSPLLYYAGESWLIRTTAIKDTFLQNNDTVTWYPDHMKHGRFGKFLENMVDWNISRNRYWGTPLNVWECESCDHQFAPKSIADLRKHSTKETPEDLELHKPYVDEVQVSCEKCGSAMNRTPEVIDVWFDSGSMPFAQYHYPFENKELFEEQFPADVIAEGIDQTRGWFYSLLAVSALYTGKVPYKRVLSLGHVLDEEGQKMSKSKGNALDPVDLVGKFGADALRWALLVDSAPWNAKRFSERTVLEAKSKFVDTLVNVYSFYVLYANLDEYNPNETYDVKRTKLDEWVLSRLHSTTKKVRTALDDYQFTNAAREIAALVDEVSNWYVRRSRNRFWESGMNAEKAAAYETLHDVLVTISKLIAPFTPFVAEDIHLNLTGSSVHLEDYPVVNESLLQPKLEAEMDAVLQVVELGRSNRNQHSLKVKQPLAELVLLEHNENDMDWESYRDIVMDELNVKAFHVELDETKYTSYQLKLNFKKAGPKFGKNVNAVNGWLKQLSQDEVQNFVSTERAVYEAASGEEVVVTTEDVLVEKVAKSGFSNTTNGQYTVMLDTNVTEELLQEGVAREFIRAVQEYRKQLNLPVNLRVDVILDTEEELQQTLTNHKELLEENLLVKQFTFGHLTNEDDELSLGETKVRIKLSAAQ.

The 'HIGH' region motif lies at 47–57 (PTANGLPHVGH). Positions 590–594 (KMSKS) match the 'KMSKS' region motif. Residue lysine 593 coordinates ATP.

Belongs to the class-I aminoacyl-tRNA synthetase family. IleS type 2 subfamily. As to quaternary structure, monomer. It depends on Zn(2+) as a cofactor.

The protein resides in the cytoplasm. The enzyme catalyses tRNA(Ile) + L-isoleucine + ATP = L-isoleucyl-tRNA(Ile) + AMP + diphosphate. In terms of biological role, catalyzes the attachment of isoleucine to tRNA(Ile). As IleRS can inadvertently accommodate and process structurally similar amino acids such as valine, to avoid such errors it has two additional distinct tRNA(Ile)-dependent editing activities. One activity is designated as 'pretransfer' editing and involves the hydrolysis of activated Val-AMP. The other activity is designated 'posttransfer' editing and involves deacylation of mischarged Val-tRNA(Ile). This Bacillus thuringiensis subsp. konkukian (strain 97-27) protein is Isoleucine--tRNA ligase 2.